The chain runs to 525 residues: MATLLRSLALFKRNKDKPPITSGSGGAIRGIKHIIIVPIPGDSSITTRSRLLDRLVRLIGNPDVSGPKLTGALIGILSLFVESPGQLIQRITDDPDVSIRLLEVVQSDQSQSGLTFASRGTNMEDEADQYFSHDDPISSDQSRFGWFENKEISDIEVQDPEGFNMILGTILAQIWVLLAKAVTAPDTAADSELRRWIKYTQQRRVVGEFRLERKWLDVVRNRIAEDLSLRRFMVALILDIKRTPGNKPRIAEMICDIDTYIVEAGLASFILTIKFGIETMYPALGLHEFAGELSTLESLMNLYQQMGETAPYMVILENSIQNKFSAGSYPLLWSYAMGVGVELENSMGGLNFGRSYFDPAYFRLGQEMVRRSAGKVSSTLASELGITAEDARLVSEIAMHTTEDKISRAVGPRQAQVSFLHGDQSENELPRLGGKEDRRVKQSRGEARESYRETGPSRASDARAAHLPTGTPLDIDTASESSQDPQDSRRSADALLRLQAMAGISEEQGSDTDTPIVYNDRNLLD.

The homomultimerization stretch occupies residues 1 to 36 (MATLLRSLALFKRNKDKPPITSGSGGAIRGIKHIII). An RNA packaging and organization of the helical nucleocapsid region spans residues 1 to 375 (MATLLRSLAL…QEMVRRSAGK (375 aa)). The ncore stretch occupies residues 1 to 403 (MATLLRSLAL…VSEIAMHTTE (403 aa)). The Nuclear localization signal motif lies at 70–77 (TGALIGIL). RNA-binding residues include K180, R195, Q202, and Y260. At T279 the chain carries Phosphothreonine; by host. N351 lines the RNA pocket. Residues 373–391 (AGKVSSTLASELGITAEDA) are homomultimerization. The interval 404–525 (DKISRAVGPR…IVYNDRNLLD (122 aa)) is ntail. Positions 418–525 (SFLHGDQSEN…IVYNDRNLLD (108 aa)) are disordered. The Nuclear export signal signature appears at 425-440 (SENELPRLGGKEDRRV). A compositionally biased stretch (basic and acidic residues) spans 433–452 (GGKEDRRVKQSRGEARESYR). The interaction with the phosphoprotein stretch occupies residues 477–505 (TASESSQDPQDSRRSADALLRLQAMAGIS).

It belongs to the paramyxoviruses nucleocapsid family. Homomultimer; forms the nucleocapsid. Binds to viral genomic RNA. N0 interacts (via Ncore) with the phosphoprotein (via N-terminus); this interaction allows P to chaperon N0 to avoid N polymerization and non-specific RNA binding before encapsidation. Interacts (via the Ntail) as N-RNA template with the phosphoprotein (via C-terminus XD); this interaction maintains the P/L complex anchored to the nucleocapsid template during the sequential transcription. Interacts with the phosphoprotein; this interaction leads to the formation of membraneless organelles that function as viral replication factories. Interacts (via Ncore) with human FCGR2B protein. Interacts (via Ntail) with a protein on human thymic epithelial cells, termed Nucleoprotein Receptor (NR); this interaction induces growth arrest. Interacts with human PPIA/CYPA and PPIB/CYPB. In terms of processing, phosphorylation at Thr-279 is required for the formation of the nucleocapsid.

It is found in the virion. The protein resides in the host cytoplasm. The protein localises to the host nucleus. In terms of biological role, forms the helical nucleocapsid (NC) in a ratio of 1 N per 6 ribonucleotides, protecting the genome from nucleases. The nucleocapsid (NC) has a helical structure with either 12.35 or 11.64 N per turn, approximately 20 nm in diameter, with a hollow central cavity approximately 5 nm in diameter. The encapsidated genomic RNA serves as template for transcription and replication; encapsidation by N is coupled to RNA synthesis. Forms the encapsidation complex with the phosphoprotein protein P. Before encapsidation, the newly synthesized free N protein, so-called N0, is chaperoned by P. Participates, together with P, in the formation of viral factories (viroplasms), which are large inclusions in the host cytoplasm where replication takes place. N is released in the blood following lysis of measles infected cells, it interacts then with human FCGR2B on immune cells, inducing apoptosis and blocking inflammatory immune response. The chain is Nucleoprotein (N) from Homo sapiens (Human).